We begin with the raw amino-acid sequence, 101 residues long: Small ribosomal subunit protein uS14 (101 aa).

This sequence belongs to the universal ribosomal protein uS14 family. As to quaternary structure, part of the 30S ribosomal subunit. Contacts proteins S3 and S10.

In terms of biological role, binds 16S rRNA, required for the assembly of 30S particles and may also be responsible for determining the conformation of the 16S rRNA at the A site. The chain is Small ribosomal subunit protein uS14 from Burkholderia ambifaria (strain MC40-6).